The chain runs to 643 residues: Threonine--tRNA ligase (643 aa).

A TGS domain is found at 1–61; that stretch reads MPIITLPDGS…SEDATLEIIT (61 aa). The tract at residues 243–534 is catalytic; the sequence is DHRKIGKALD…ITEEYAGFFP (292 aa). Residues C334, H385, and H511 each contribute to the Zn(2+) site.

This sequence belongs to the class-II aminoacyl-tRNA synthetase family. As to quaternary structure, homodimer. Zn(2+) serves as cofactor.

It localises to the cytoplasm. It catalyses the reaction tRNA(Thr) + L-threonine + ATP = L-threonyl-tRNA(Thr) + AMP + diphosphate + H(+). Catalyzes the attachment of threonine to tRNA(Thr) in a two-step reaction: L-threonine is first activated by ATP to form Thr-AMP and then transferred to the acceptor end of tRNA(Thr). Also edits incorrectly charged L-seryl-tRNA(Thr). The polypeptide is Threonine--tRNA ligase (Glaesserella parasuis serovar 5 (strain SH0165) (Haemophilus parasuis)).